The primary structure comprises 592 residues: Monocopper oxidase-like protein SKS2 (592 aa).

An N-terminal signal peptide occupies residues 1-23 (MAATDFFFAFVFSFALIFGFSFA). N-linked (GlcNAc...) asparagine glycans are attached at residues N61, N110, N172, N203, N259, N280, N295, N344, N364, N433, and N447. Position 455 (H455) interacts with Cu cation. 2 N-linked (GlcNAc...) asparagine glycosylation sites follow: N476 and N536. S564 is lipidated: GPI-anchor amidated serine. Residues 565–592 (ATKSMTNGQLILIFSMMMVLLSSFSSFC) constitute a propeptide, removed in mature form.

Belongs to the multicopper oxidase family. The cofactor is Cu cation.

It localises to the cell membrane. In Arabidopsis thaliana (Mouse-ear cress), this protein is Monocopper oxidase-like protein SKS2 (SKS2).